A 31-amino-acid chain; its full sequence is Electron transfer flavoprotein-ubiquinone oxidoreductase (31 aa).

11–25 (VVIVGAGGAGLSAAI) contributes to the FAD binding site.

Monomer. Requires [4Fe-4S] cluster as cofactor. The cofactor is FAD.

The catalysed reaction is a ubiquinone + reduced [electron-transfer flavoprotein] = a ubiquinol + oxidized [electron-transfer flavoprotein] + H(+). Its function is as follows. Accepts electrons from ETF and reduces ubiquinone. The polypeptide is Electron transfer flavoprotein-ubiquinone oxidoreductase (Paracoccus denitrificans).